The primary structure comprises 718 residues: Putative aminodeoxychorismate synthase (718 aa).

Positions 9 to 203 (QILLIDCYDS…LSLADTPNIQ (195 aa)) constitute a Glutamine amidotransferase type-1 domain. Cysteine 88 serves as the catalytic Nucleophile. Active-site residues include histidine 177 and glutamate 179. The segment at 266–718 (FLDSAKKPGR…NLKNKKRSCK (453 aa)) is PABB component.

This sequence in the C-terminal section; belongs to the anthranilate synthase component I family.

The protein resides in the cytoplasm. It is found in the nucleus. The catalysed reaction is chorismate + L-glutamine = 4-amino-4-deoxychorismate + L-glutamate. It participates in cofactor biosynthesis; tetrahydrofolate biosynthesis; 4-aminobenzoate from chorismate: step 1/2. Functionally, catalyzes the biosynthesis of 4-amino-4-deoxychorismate (ADC) from chorismate and glutamine. Required for the synthesis of 4-aminobenzoate (PABA), an important component in tetrahydrofolate biosynthesis. The chain is Putative aminodeoxychorismate synthase from Schizosaccharomyces pombe (strain 972 / ATCC 24843) (Fission yeast).